The following is a 185-amino-acid chain: Ion-translocating oxidoreductase complex subunit B (185 aa).

A hydrophobic region spans residues 1–26 (MNHILLIILIFAALALIFGLLLGFAA). The 4Fe-4S domain maps to 32-90 (ESDPIVDQLDALLPQTQCGQCGYPGCRPYAEAIANGDSINKCVPGGAQTIQNIADLMGV). 12 residues coordinate [4Fe-4S] cluster: C49, C52, C57, C73, C115, C118, C121, C125, C145, C148, C151, and C155. 4Fe-4S ferredoxin-type domains lie at 106–135 (RVAF…GAPK) and 136–165 (LMHT…MIEL).

It belongs to the 4Fe4S bacterial-type ferredoxin family. RnfB subfamily. As to quaternary structure, the complex is composed of six subunits: RnfA, RnfB, RnfC, RnfD, RnfE and RnfG. [4Fe-4S] cluster is required as a cofactor.

The protein resides in the cell inner membrane. Functionally, part of a membrane-bound complex that couples electron transfer with translocation of ions across the membrane. This chain is Ion-translocating oxidoreductase complex subunit B, found in Tolumonas auensis (strain DSM 9187 / NBRC 110442 / TA 4).